The chain runs to 97 residues: Glutamyl-tRNA(Gln) amidotransferase subunit C (97 aa).

The protein belongs to the GatC family. Heterotrimer of A, B and C subunits.

It carries out the reaction L-glutamyl-tRNA(Gln) + L-glutamine + ATP + H2O = L-glutaminyl-tRNA(Gln) + L-glutamate + ADP + phosphate + H(+). The enzyme catalyses L-aspartyl-tRNA(Asn) + L-glutamine + ATP + H2O = L-asparaginyl-tRNA(Asn) + L-glutamate + ADP + phosphate + 2 H(+). Allows the formation of correctly charged Asn-tRNA(Asn) or Gln-tRNA(Gln) through the transamidation of misacylated Asp-tRNA(Asn) or Glu-tRNA(Gln) in organisms which lack either or both of asparaginyl-tRNA or glutaminyl-tRNA synthetases. The reaction takes place in the presence of glutamine and ATP through an activated phospho-Asp-tRNA(Asn) or phospho-Glu-tRNA(Gln). The polypeptide is Glutamyl-tRNA(Gln) amidotransferase subunit C (Sulfurisphaera tokodaii (strain DSM 16993 / JCM 10545 / NBRC 100140 / 7) (Sulfolobus tokodaii)).